Here is a 321-residue protein sequence, read N- to C-terminus: tRNA-5-methyluridine(54) 2-sulfurtransferase (321 aa).

The Zn(2+) site is built by Cys-3, Cys-6, Cys-22, and His-25. ATP is bound by residues 53–55, Asp-59, and Ile-79; that span reads AVS. 2 residues coordinate [4Fe-4S] cluster: Cys-130 and Cys-133. Residue Lys-137 forms a Glycyl lysine isopeptide (Lys-Gly) (interchain with G-Cter in TtuB) linkage. The ATP site is built by Gly-156 and Asp-161. [4Fe-4S] cluster is bound at residue Cys-222. Glycyl lysine isopeptide (Lys-Gly) (interchain with G-Cter in TtuB) cross-links involve residues Lys-226 and Lys-229. Cys-274, Cys-277, Cys-286, and Cys-289 together coordinate Zn(2+).

Belongs to the TtcA family. TtuA subfamily. In terms of assembly, homodimer. Is able to form a heterocomplex with TtuB. Requires [4Fe-4S] cluster as cofactor. It depends on Mg(2+) as a cofactor. Conjugated to TtuB via covalent linkages involving Lys-137, Lys-226 and Lys-229.

The enzyme catalyses [TtuB sulfur-carrier protein]-C-terminal-Gly-aminoethanethioate + 5-methyluridine(54) in tRNA + ATP + H2O = [TtuB sulfur-carrier protein]-C-terminal Gly-Gly + 5-methyl-2-thiouridine(54) in tRNA + AMP + diphosphate + H(+). Its pathway is tRNA modification. Enzymatic activity may be regulated by TtuB conjugation. In terms of biological role, catalyzes the ATP-dependent 2-thiolation of 5-methyluridine residue at position 54 in the T loop of tRNAs, leading to 5-methyl-2-thiouridine (m(5)s(2)U or s(2)T). This modification allows thermal stabilization of tRNAs in thermophilic microorganisms, and is required for cell growth at high temperatures. TtuA transfers the S atom from the thiocarboxylated C-terminus of TtuB to tRNA. In Thermus thermophilus (strain ATCC BAA-163 / DSM 7039 / HB27), this protein is tRNA-5-methyluridine(54) 2-sulfurtransferase.